The primary structure comprises 285 residues: NADPH-dependent 7-cyano-7-deazaguanine reductase (285 aa).

Residue 91 to 93 (IES) coordinates substrate. 93-94 (SK) serves as a coordination point for NADPH. Cys191 acts as the Thioimide intermediate in catalysis. Asp198 (proton donor) is an active-site residue. 230–231 (HE) provides a ligand contact to substrate. 259 to 260 (RG) serves as a coordination point for NADPH.

Belongs to the GTP cyclohydrolase I family. QueF type 2 subfamily. Homodimer.

The protein resides in the cytoplasm. The enzyme catalyses 7-aminomethyl-7-carbaguanine + 2 NADP(+) = 7-cyano-7-deazaguanine + 2 NADPH + 3 H(+). Its pathway is tRNA modification; tRNA-queuosine biosynthesis. Catalyzes the NADPH-dependent reduction of 7-cyano-7-deazaguanine (preQ0) to 7-aminomethyl-7-deazaguanine (preQ1). In Legionella pneumophila (strain Corby), this protein is NADPH-dependent 7-cyano-7-deazaguanine reductase.